We begin with the raw amino-acid sequence, 724 residues long: Disks large homolog 4 (724 aa).

2 S-palmitoyl cysteine lipidation sites follow: Cys3 and Cys5. A disordered region spans residues 15 to 35 (QDEDTPPLEHSPAHLPNQANS). PDZ domains lie at 65–151 (EITL…VMRR) and 160–246 (EIKL…VAKP). A phosphoserine mark is found at Ser73 and Ser142. Phosphotyrosine is present on Tyr240. Ser295 carries the phosphoserine modification. Positions 313 to 393 (RIVIHRGSTG…QTVTIIAQYK (81 aa)) constitute a PDZ 3 domain. Residues Ser415 and Ser418 each carry the phosphoserine modification. Thr420 carries the post-translational modification Phosphothreonine. 4 positions are modified to phosphoserine: Ser422, Ser425, Ser449, and Ser480. The SH3 domain maps to 428-498 (KRGFYIRALF…PSKRRVERRE (71 aa)). The Guanylate kinase-like domain maps to 534 to 709 (ARPIIILGPT…IYHKVKRVIE (176 aa)). Residue Tyr580 is modified to Phosphotyrosine. 2 positions are modified to phosphoserine: Ser606 and Ser654. Residue Tyr715 is modified to Phosphotyrosine.

The protein belongs to the MAGUK family. Interacts through its PDZ domains with ANO2 and NETO1. Interacts with KCNJ4. Interacts through its first two PDZ domains with GRIN2A, GRIN2B, GRIN2C and GRIN2D. Interacts with ERBB4. Interacts with KCNA1, KCNA2, KCNA3 and KCNA4. Interacts with LRRC4 and LRRC4B. Interacts with SYNGAP1. Interacts with ASIC3. Interacts with SEMA4C. Interacts with CXADR. Interacts with KCND2. Interacts (via first PDZ domain) with CRIPT. Interacts through its first PDZ domain with GRIK2 and KCNA4. Interacts through its second PDZ domain with the PDZ domain of NOS1 or the C-terminus of CAPON. Interacts through its third PDZ domain with NLGN1 and CRIPT, and probably with NLGN2 and NLGN3. Interacts through its guanylate kinase-like domain with DLGAP1/GKAP, DLGAP2, DLGAP3, DLGAP4, MAP1A, BEGAIN and SIPA1L1. Interacts through its guanylate kinase-like domain with KIF13B. Isoform 2 interacts through an L27 domain with HGS/HRS and the first L27 domain of CASK. Interacts with ANKS1B. Interacts with ADR1B. May interact with HTR2A. Interacts with ADAM22, KLHL17 and LGI1. Interacts with FRMPD4 (via C-terminus). Interacts with LRFN1 and LRFN2. Interacts with LRFN4. Interacts (via N-terminal tandem pair of PDZ domains) with GPER1 (via C-terminus tail motif); the interaction is direct and induces the increase of GPER1 protein levels residing at the plasma membrane surface in a estradiol-independent manner. Interacts (via N-terminus tandem pair of PDZ domains) with NOS1 (via N-terminal domain). Interacts with SHANK3. Interacts with GPR85. Interacts with CACNG2 and MPP2 (via the SH3-Guanylate kinase-like sub-module). Interacts with ADGRB1. Found in a complex with PRR7 and GRIN1. Interacts (via PDZ3 domain and to lesser degree via PDZ2 domain) with PRR7. Component of the postsynaptic hippocampal AMPA-type glutamate receptor (AMPAR) complex, at least composed of pore forming AMPAR subunits GRIA1, GRIA2 and GRIA3 and AMPAR auxiliary proteins SHISA6 and SHISA7. Interacts (via its first two PDZ domains) with SHISA6 and SHISA7 (via PDZ-binding motif); the interaction is direct. Interacts (via PDZ domain 2) with SEMA4F (via PDZ-binding motif); this interaction may promote translocation of DLG4/SAP90 to the membrane. Interacts with RPH3A and GRIN2A; this ternary complex regulates NMDA receptor composition at postsynaptic membranes. Interacts with ABR and BCR. Interacts with DGKI (via PDZ-binding motif); controls the localization of DGKI to the synapse. Interacts with C9orf72, SMCR8 and RAB39B. Interacts with ZDHHC5. Interacts with PTEN (via PDZ domain-binding motif); the interaction is induced by NMDA and is required for PTEN location at postsynaptic density. Found in a complex with GRIA1, GRIA2, GRIA3, GRIA4, CACNG8 and CNIH2. Interacts with FAM81A; the interaction facilitates condensate formation via liquid-liquid phase separation. Interacts with ADGRL3. Interacts with SORCS3. Post-translationally, palmitoylated. Palmitoylation is required for targeting to postsynaptic density, plasma membrane and synapses. Palmitoylation by ZDHHC2 occurs when the synaptic activity decreases and induces DLG4 synaptic clustering. Palmitoylation by ZDHHC15 regulates trafficking to the postsynaptic density and function in synaptogenesis. Palmitoylation may play a role in glutamate receptor GRIA1 synapse clustering. Depalmitoylated by ABHD17A and ABHD17B and to a lesser extent by ABHD17C, ABHD12, ABHD13, LYPLA1 and LYPLA2. Undergoes rapid synaptic palmitoylation/depalmitoylation cycle during neuronal development which slows down in mature neurons. Ubiquitinated by MDM2 in response to NMDA receptor activation, leading to proteasome-mediated degradation of DLG4 which is required for AMPA receptor endocytosis. In terms of tissue distribution, expressed in brain (at protein level). Detected in juxtaparanodal zones in the central nervous system and at nerve terminal plexuses of basket cells in the cerebellum. Expressed in cerebrum. Expressed in hippocampal neurons (at protein level). Isoform 1 and isoform 2: highly expressed in cerebellum, cortex, hippocampus, and corpus striatum.

The protein localises to the cell membrane. The protein resides in the postsynaptic density. It is found in the synapse. It localises to the cytoplasm. Its subcellular location is the cell projection. The protein localises to the axon. The protein resides in the dendritic spine. It is found in the dendrite. It localises to the presynapse. Postsynaptic scaffolding protein that plays a critical role in synaptogenesis and synaptic plasticity by providing a platform for the postsynaptic clustering of crucial synaptic proteins. Interacts with the cytoplasmic tail of NMDA receptor subunits and shaker-type potassium channels. Required for synaptic plasticity associated with NMDA receptor signaling. Overexpression or depletion of DLG4 changes the ratio of excitatory to inhibitory synapses in hippocampal neurons. May reduce the amplitude of ASIC3 acid-evoked currents by retaining the channel intracellularly. May regulate the intracellular trafficking of ADR1B. Also regulates AMPA-type glutamate receptor (AMPAR) immobilization at postsynaptic density keeping the channels in an activated state in the presence of glutamate and preventing synaptic depression. Under basal conditions, cooperates with FYN to stabilize palmitoyltransferase ZDHHC5 at the synaptic membrane through FYN-mediated phosphorylation of ZDHHC5 and its subsequent inhibition of association with endocytic proteins. The chain is Disks large homolog 4 from Rattus norvegicus (Rat).